A 200-amino-acid polypeptide reads, in one-letter code: 3-isopropylmalate dehydratase small subunit (200 aa).

Belongs to the LeuD family. LeuD type 1 subfamily. As to quaternary structure, heterodimer of LeuC and LeuD.

The catalysed reaction is (2R,3S)-3-isopropylmalate = (2S)-2-isopropylmalate. It participates in amino-acid biosynthesis; L-leucine biosynthesis; L-leucine from 3-methyl-2-oxobutanoate: step 2/4. Catalyzes the isomerization between 2-isopropylmalate and 3-isopropylmalate, via the formation of 2-isopropylmaleate. In Campylobacter jejuni subsp. jejuni serotype O:6 (strain 81116 / NCTC 11828), this protein is 3-isopropylmalate dehydratase small subunit.